A 389-amino-acid chain; its full sequence is Succinate--CoA ligase [ADP-forming] subunit beta (389 aa).

ATP-binding positions include K46, 53-55 (GRG), E99, C102, and E107. Residues N199 and D213 each contribute to the Mg(2+) site. Substrate is bound by residues N264 and 321 to 323 (GIV).

Belongs to the succinate/malate CoA ligase beta subunit family. Heterotetramer of two alpha and two beta subunits. The cofactor is Mg(2+).

The catalysed reaction is succinate + ATP + CoA = succinyl-CoA + ADP + phosphate. It catalyses the reaction GTP + succinate + CoA = succinyl-CoA + GDP + phosphate. It participates in carbohydrate metabolism; tricarboxylic acid cycle; succinate from succinyl-CoA (ligase route): step 1/1. Functionally, succinyl-CoA synthetase functions in the citric acid cycle (TCA), coupling the hydrolysis of succinyl-CoA to the synthesis of either ATP or GTP and thus represents the only step of substrate-level phosphorylation in the TCA. The beta subunit provides nucleotide specificity of the enzyme and binds the substrate succinate, while the binding sites for coenzyme A and phosphate are found in the alpha subunit. The chain is Succinate--CoA ligase [ADP-forming] subunit beta from Haemophilus influenzae (strain 86-028NP).